The sequence spans 268 residues: Probable 1-acyl-sn-glycerol-3-phosphate acyltransferase (268 aa).

The HXXXXD motif motif lies at histidine 92–aspartate 97.

It belongs to the 1-acyl-sn-glycerol-3-phosphate acyltransferase family.

The catalysed reaction is a 1-acyl-sn-glycero-3-phosphate + an acyl-CoA = a 1,2-diacyl-sn-glycero-3-phosphate + CoA. The protein operates within phospholipid metabolism; CDP-diacylglycerol biosynthesis; CDP-diacylglycerol from sn-glycerol 3-phosphate: step 2/3. In terms of biological role, converts lysophosphatidic acid (LPA) into phosphatidic acid by incorporating acyl moiety at the 2 position. In Mycoplasma genitalium (strain ATCC 33530 / DSM 19775 / NCTC 10195 / G37) (Mycoplasmoides genitalium), this protein is Probable 1-acyl-sn-glycerol-3-phosphate acyltransferase (plsC).